The following is a 1849-amino-acid chain: Immunoglobulin A1 protease autotransporter (1849 aa).

Residues 1–25 (MLNKKFKLNFIALTVAYALTPYTEA) form the signal peptide. The region spanning 26 to 343 (ALVRDDVDYQ…NIYKHEFAEK (318 aa)) is the Peptidase S6 domain. S299 is an active-site residue. Residues 998-1538 (VEKRNQTVDT…EPVELPTENA (541 aa)) form a disordered region. Over residues 1004–1015 (TVDTTNITTPND) the composition is skewed to polar residues. The span at 1066–1077 (EETNTANSTETA) shows a compositional bias: low complexity. Composition is skewed to polar residues over residues 1079-1097 (KSDT…VPSE) and 1138-1151 (VEAN…TQSE). Residues 1152-1166 (GKTEETQTAETKSEP) are compositionally biased toward basic and acidic residues. The segment covering 1167–1184 (TESVTVSENQPEKTVSQS) has biased composition (polar residues). Residues 1185–1205 (TEDKVVVEKEEKAKVETEETQ) are compositionally biased toward basic and acidic residues. Residues 1237 to 1268 (ALQQTQPTTVAAAETTSPNSKPAEETQQPSEK) are compositionally biased toward polar residues. Basic and acidic residues predominate over residues 1291-1301 (ETAKVEKEKTQ). Low complexity-rich tracts occupy residues 1314 to 1330 (QEQP…PQAE), 1345 to 1361 (PQPQ…VPTT), and 1369 to 1381 (KPAA…AKPQ). Over residues 1388 to 1437 (NVSTVNTKEPQSQTSATVSTEQPAKETSSNVEQPAPENSINTGSATTMTE) the composition is skewed to polar residues. The segment covering 1438–1457 (TAEKSDKPQMETVTENDRQP) has biased composition (basic and acidic residues). The span at 1493–1513 (EETTVASTQETTVDNSVSTPK) shows a compositional bias: low complexity. An Autotransporter domain is found at 1597-1849 (NNEGQYNVWI…TAEVKLSFSF (253 aa)).

The protein resides in the periplasm. Its subcellular location is the secreted. It is found in the cell surface. It localises to the cell outer membrane. The catalysed reaction is Cleavage of immunoglobulin A molecules at certain Pro-|-Xaa bonds in the hinge region. No small molecule substrates are known.. Its function is as follows. Virulence factor; cleaves host immunoglobulin A producing intact Fc and Fab fragments. This chain is Immunoglobulin A1 protease autotransporter (iga), found in Haemophilus influenzae.